Consider the following 332-residue polypeptide: 5,10-methylenetetrahydromethanopterin reductase (332 aa).

The protein belongs to the mer family.

It is found in the cytoplasm. The enzyme catalyses 5-methyl-5,6,7,8-tetrahydromethanopterin + oxidized coenzyme F420-(gamma-L-Glu)(n) + H(+) = 5,10-methylenetetrahydromethanopterin + reduced coenzyme F420-(gamma-L-Glu)(n). The protein operates within metabolic intermediate metabolism; lactate oxidation. Functionally, catalyzes the oxidation of methyl-H(4)MPT to methylene-H(4)MPT. This is 5,10-methylenetetrahydromethanopterin reductase from Archaeoglobus fulgidus (strain ATCC 49558 / DSM 4304 / JCM 9628 / NBRC 100126 / VC-16).